We begin with the raw amino-acid sequence, 266 residues long: Eukaryotic translation initiation factor 3 subunit J (266 aa).

2 disordered regions span residues 1–111 and 217–266; these read MAPS…EKDA and NEKM…DDFM. Positions 26–44 are enriched in acidic residues; it reads DEEEEDVLDSWDAAEDSEV. The stretch at 40–82 forms a coiled coil; it reads EDSEVEREKAAKAAEAKAKAEAEAAANKKSKAQRIQEKKAQRK. Basic and acidic residues-rich tracts occupy residues 45 to 61 and 73 to 85; these read EREK…KAEA and RIQE…KADA. Residues 86 to 97 show a composition bias toward acidic residues; it reads DAEDSDDSDEDE. Composition is skewed to basic and acidic residues over residues 98-111 and 218-230; these read AERR…EKDA and EKMK…DKGN. Acidic residues predominate over residues 254-266; it reads SYDDDGLDDDDFM.

It belongs to the eIF-3 subunit J family. In terms of assembly, component of the eukaryotic translation initiation factor 3 (eIF-3) complex.

It localises to the cytoplasm. In terms of biological role, component of the eukaryotic translation initiation factor 3 (eIF-3) complex, which is involved in protein synthesis of a specialized repertoire of mRNAs and, together with other initiation factors, stimulates binding of mRNA and methionyl-tRNAi to the 40S ribosome. The eIF-3 complex specifically targets and initiates translation of a subset of mRNAs involved in cell proliferation. This is Eukaryotic translation initiation factor 3 subunit J (hcr1) from Aspergillus niger (strain ATCC MYA-4892 / CBS 513.88 / FGSC A1513).